The sequence spans 334 residues: Biotin synthase (334 aa).

The region spanning 48-275 (NQVQTSQLLS…RSMVRLSAGR (228 aa)) is the Radical SAM core domain. 3 residues coordinate [4Fe-4S] cluster: C63, C67, and C70. Residues C107, C138, C198, and R270 each coordinate [2Fe-2S] cluster.

This sequence belongs to the radical SAM superfamily. Biotin synthase family. Homodimer. [4Fe-4S] cluster is required as a cofactor. The cofactor is [2Fe-2S] cluster.

It carries out the reaction (4R,5S)-dethiobiotin + (sulfur carrier)-SH + 2 reduced [2Fe-2S]-[ferredoxin] + 2 S-adenosyl-L-methionine = (sulfur carrier)-H + biotin + 2 5'-deoxyadenosine + 2 L-methionine + 2 oxidized [2Fe-2S]-[ferredoxin]. It participates in cofactor biosynthesis; biotin biosynthesis; biotin from 7,8-diaminononanoate: step 2/2. Functionally, catalyzes the conversion of dethiobiotin (DTB) to biotin by the insertion of a sulfur atom into dethiobiotin via a radical-based mechanism. This Maricaulis maris (strain MCS10) (Caulobacter maris) protein is Biotin synthase.